The sequence spans 136 residues: Large ribosomal subunit protein uL16 (136 aa).

Belongs to the universal ribosomal protein uL16 family. Part of the 50S ribosomal subunit.

Its function is as follows. Binds 23S rRNA and is also seen to make contacts with the A and possibly P site tRNAs. The polypeptide is Large ribosomal subunit protein uL16 (Haemophilus ducreyi (strain 35000HP / ATCC 700724)).